The sequence spans 365 residues: tRNA/tmRNA (uracil-C(5))-methyltransferase (365 aa).

The S-adenosyl-L-methionine site is built by Gln-189, Tyr-217, Asn-222, Glu-238, and Asp-298. Cys-323 functions as the Nucleophile in the catalytic mechanism. Glu-357 serves as the catalytic Proton acceptor.

This sequence belongs to the class I-like SAM-binding methyltransferase superfamily. RNA M5U methyltransferase family. TrmA subfamily.

The catalysed reaction is uridine(54) in tRNA + S-adenosyl-L-methionine = 5-methyluridine(54) in tRNA + S-adenosyl-L-homocysteine + H(+). It catalyses the reaction uridine(341) in tmRNA + S-adenosyl-L-methionine = 5-methyluridine(341) in tmRNA + S-adenosyl-L-homocysteine + H(+). Dual-specificity methyltransferase that catalyzes the formation of 5-methyluridine at position 54 (m5U54) in all tRNAs, and that of position 341 (m5U341) in tmRNA (transfer-mRNA). The protein is tRNA/tmRNA (uracil-C(5))-methyltransferase of Shewanella frigidimarina (strain NCIMB 400).